A 1478-amino-acid chain; its full sequence is Phospholipase B1, membrane-associated (1478 aa).

An N-terminal signal peptide occupies residues 1–27 (MELYPGVSPVGLLLLLLLGQGPSQIHG). Topologically, residues 28-1422 (SSGENTLAWQ…KAEEPSNALY (1395 aa)) are extracellular. 4 tandem repeats follow at residues 43–351 (WTLK…YKNS), 366–711 (MKEG…TKNS), 712–1058 (NLGN…FRNS), and 1068–1407 (IENW…LRNS). The interval 43 to 1407 (WTLKNFPFPC…RPFLYTLRNS (1365 aa)) is 4 X 308-326 AA approximate repeats. An N-linked (GlcNAc...) asparagine glycan is attached at N180. Residues S404 and D518 contribute to the active site. Residues N525, N626, and N637 are each glycosylated (N-linked (GlcNAc...) asparagine). H659 is a catalytic residue. Residues N715, N764, N787, N801, N830, N926, N1227, N1280, N1289, and N1387 are each glycosylated (N-linked (GlcNAc...) asparagine). The segment at 1408-1450 (QLLPDKAEEPSNALYWAVPVAAIGGLAVGILGVMLWRTVKPVQ) is necessary for membrane localization. Residues 1423–1443 (WAVPVAAIGGLAVGILGVMLW) traverse the membrane as a helical segment. The Cytoplasmic segment spans residues 1444–1478 (RTVKPVQQEEEEEDTLPNTSVTQDAVSEKRLKAGN). The tract at residues 1451–1478 (QEEEEEDTLPNTSVTQDAVSEKRLKAGN) is disordered. Residues 1459-1468 (LPNTSVTQDA) show a composition bias toward polar residues. Residues 1469 to 1478 (VSEKRLKAGN) show a composition bias toward basic and acidic residues.

It belongs to the 'GDSL' lipolytic enzyme family. Phospholipase B1 subfamily. Post-translationally, undergoes proteolytic cleavage in the ileum.

It is found in the apical cell membrane. The catalysed reaction is a 1,2-diacyl-sn-glycero-3-phosphocholine + H2O = a 1-acyl-sn-glycero-3-phosphocholine + a fatty acid + H(+). It catalyses the reaction a 1-O-alkyl-2-acyl-sn-glycero-3-phosphocholine + H2O = a 1-O-alkyl-sn-glycero-3-phosphocholine + a fatty acid + H(+). The enzyme catalyses a 1-acyl-sn-glycero-3-phosphocholine + H2O = sn-glycerol 3-phosphocholine + a fatty acid + H(+). It carries out the reaction a triacylglycerol + H2O = a diacylglycerol + a fatty acid + H(+). The catalysed reaction is 1,2-dihexadecanoyl-sn-glycero-3-phosphocholine + H2O = 1-hexadecanoyl-sn-glycero-3-phosphocholine + hexadecanoate + H(+). It catalyses the reaction 1-hexadecanoyl-2-(9Z-octadecenoyl)-sn-glycero-3-phosphocholine + H2O = 1-hexadecanoyl-sn-glycero-3-phosphocholine + (9Z)-octadecenoate + H(+). The enzyme catalyses 1,2-di-(9Z-octadecenoyl)-sn-glycero-3-phosphocholine + H2O = 1-(9Z-octadecenoyl)-sn-glycero-3-phosphocholine + (9Z)-octadecenoate + H(+). It carries out the reaction 1-hexadecanoyl-2-(9Z,12Z-octadecadienoyl)-sn-glycero-3-phosphocholine + H2O = (9Z,12Z)-octadecadienoate + 1-hexadecanoyl-sn-glycero-3-phosphocholine + H(+). The catalysed reaction is 1-hexadecanoyl-2-(9Z,12Z-octadecadienoyl)-sn-glycero-3-phosphocholine + H2O = 2-(9Z,12Z-octadecadienoyl)-sn-glycero-3-phosphocholine + hexadecanoate + H(+). It catalyses the reaction 1-hexadecanoyl-2-(9Z-octadecenoyl)-sn-glycero-3-phosphoethanolamine + H2O = 1-hexadecanoyl-sn-glycero-3-phosphoethanolamine + (9Z)-octadecenoate + H(+). The enzyme catalyses 1-hexadecanoyl-2-(9Z-octadecenoyl)-sn-glycero-3-phospho-(1'-sn-glycerol) + H2O = 1-hexadecanoyl-sn-glycero-3-phospho-(1'-sn-glycerol) + (9Z)-octadecenoate + H(+). It carries out the reaction 1,2-dihexadecanoyl-sn-glycero-3-phosphocholine + 2 H2O = sn-glycerol 3-phosphocholine + 2 hexadecanoate + 2 H(+). The catalysed reaction is 1-O-hexadecyl-2-(9Z)-octadecenoyl-sn-glycero-3-phosphocholine + H2O = 1-O-hexadecyl-sn-glycero-3-phosphocholine + (9Z)-octadecenoate + H(+). It catalyses the reaction 1-hexadecanoyl-sn-glycero-3-phosphocholine + H2O = sn-glycerol 3-phosphocholine + hexadecanoate + H(+). The enzyme catalyses 1,2,3-tri-(9Z-octadecenoyl)-glycerol + H2O = di-(9Z)-octadecenoylglycerol + (9Z)-octadecenoate + H(+). It carries out the reaction 1-hexadecanoyl-2-(9Z)-octadecenoyl-3-octadecanoyl-sn-glycerol + H2O = 1-hexadecanoyl-2-(9Z-octadecenoyl)-sn-glycerol + octadecanoate + H(+). The catalysed reaction is 1,3-dihexadecanoyl-2-(9Z-octadecenoyl)glycerol + H2O = 1,3-dihexadecanoylglycerol + (9Z)-octadecenoate + H(+). It catalyses the reaction 1,3-dihexadecanoyl-2-(9Z-octadecenoyl)glycerol + H2O = 1-hexadecanoyl-2-(9Z-octadecenoyl)-glycerol + hexadecanoate + H(+). The enzyme catalyses 1-hexadecanoyl-2-(9Z)-octadecenoyl-3-octadecanoyl-sn-glycerol + H2O = 1-hexadecanoyl-3-octadecanoyl-sn-glycerol + (9Z)-octadecenoate + H(+). It carries out the reaction 1-hexadecanoyl-2-(9Z)-octadecenoyl-3-octadecanoyl-sn-glycerol + H2O = 2-(9Z-octadecenoyl)-3-octadecanoyl-sn-glycerol + hexadecanoate + H(+). The catalysed reaction is 1-octadecanoyl-2-(9Z,12Z)-octadecadienoyl-sn-glycerol + H2O = 1-octadecanoyl-sn-glycerol + (9Z,12Z)-octadecadienoate + H(+). It catalyses the reaction 1,2-di-(9Z-octadecenoyl)-sn-glycerol + H2O = 1-(9Z-octadecenoyl)-sn-glycerol + (9Z)-octadecenoate + H(+). The enzyme catalyses 2,3-di-(9Z)-octadecenoyl-sn-glycerol + H2O = 3-(9Z-octadecenoyl)-sn-glycerol + (9Z)-octadecenoate + H(+). It carries out the reaction 1,3-di-(9Z-octadecenoyl)-glycerol + H2O = 1-(9Z-octadecenoyl)-glycerol + (9Z)-octadecenoate + H(+). The catalysed reaction is 1-(9Z-octadecenoyl)-glycerol + H2O = glycerol + (9Z)-octadecenoate + H(+). It catalyses the reaction 2-(9Z-octadecenoyl)-glycerol + H2O = glycerol + (9Z)-octadecenoate + H(+). Functionally, calcium-independent membrane-associated phospholipase that catalyzes complete diacylation of phospholipids by hydrolyzing both sn-1 and sn-2 fatty acyl chains attached to the glycerol backbone (phospholipase B activity). Has dual phospholipase and lysophospholipase activities toward diacylphospholipids. Preferentially cleaves sn-2 ester bonds over sn-1 bonds. Acts as a lipase toward glycerolipid substrates. Hydrolyzes fatty acyl chains of diacylglycerols with preference for the sn-2 position and of triacylglycerols with not positional selectivity. May also hydrolyze long chain retinyl esters such as retinyl palmitate. May contribute to digestion of dietary phospholipids, glycerolipids and retinoids, facilitating lipid absorption at the brush border. In Mus musculus (Mouse), this protein is Phospholipase B1, membrane-associated (Plb1).